The chain runs to 583 residues: MPRGLELLIAQTILQGFDAQYGRFLEVTSGAQQRFEQADWHAVQQAMKSRIHLYDHHVGLVVEQLRCITDGKSTDADFLLRVKEHYTRLLPDYPRFEIAESFFNSVYCRLFDHRSLTPERLFIFSSQPERRFRTIPRPLAKDFFPDHGWETLLMRILSDLPLRLPWQNKSRDIRYIIAHLTETLGEDALPCCHVQVANELFYRNKAAWLVGKLTTPDGTLPFLLPIHRTDEGELFVDTCLTTTAEASIVFGFARSYFMVYAPLPAALVEWLREILPGKTTAELYMAIGCQKHAKTESYREYLCYLAESDEKFIEAPGIRGMVMLVFTLPGFDRVFKIIKDKFAPQKEMSAAHVRACYQLVKEHDRVGRMADTQEFENFVLDKRQIDPALMALLRQEAPEKITDLGEHIVIRHLYIERRMVPLNIWLEQVEGQQLRDAIEEYGNAIRQLAAANIFPGDMLFKNFGVTRHGRVVFYDYDEICYMTEVNFRDIPPARYPEDELASEPWYSVSPGDVFPEEFRHWLCADPRIGPLFEEMHADLFRADYWRALQTRIKEGHVEDVYAYRRRQRFSVRYGAISSTANSS.

ATP is bound by residues 315-321 and Lys336; that span reads APGIRGM. Asp371 is a catalytic residue.

Belongs to the AceK family.

The protein resides in the cytoplasm. The enzyme catalyses L-seryl-[isocitrate dehydrogenase] + ATP = O-phospho-L-seryl-[isocitrate dehydrogenase] + ADP + H(+). Bifunctional enzyme which can phosphorylate or dephosphorylate isocitrate dehydrogenase (IDH) on a specific serine residue. This is a regulatory mechanism which enables bacteria to bypass the Krebs cycle via the glyoxylate shunt in response to the source of carbon. When bacteria are grown on glucose, IDH is fully active and unphosphorylated, but when grown on acetate or ethanol, the activity of IDH declines drastically concomitant with its phosphorylation. The protein is Isocitrate dehydrogenase kinase/phosphatase of Salmonella dublin (strain CT_02021853).